Here is a 228-residue protein sequence, read N- to C-terminus: Woronin body membrane protein wscA (228 aa).

Helical transmembrane passes span 89–109 (MTLY…GILQ), 130–150 (LIVS…IAGA), 162–182 (AGFM…LAFA), and 185–205 (FLPE…IGTY).

The protein belongs to the peroxisomal membrane protein PXMP2/4 family. Self-assembles into detergent-resistant oligomers and forms a complex with hexA assemblies.

Its subcellular location is the peroxisome membrane. It localises to the cell septum. In terms of biological role, woronin sorting complex protein involved in both Woronin bodies (WB) formation and inherence. Localizes to large peroxisome membranes where it self-assembles into detergent-resistant oligomers that envelop hex-1 assemblies, producing asymmetrical nascent WBs. These structures are then delivered to the cell cortex, which permits partitioning of the nascent WB and WB inheritance. The sequence is that of Woronin body membrane protein wscA from Aspergillus fumigatus (strain ATCC MYA-4609 / CBS 101355 / FGSC A1100 / Af293) (Neosartorya fumigata).